The sequence spans 408 residues: Exo-alpha-sialidase ARB_03431 (408 aa).

Positions 1 to 22 (MGIKQWLLSLVVVAISATATQA) are cleaved as a signal peptide. Residues Arg-62, Arg-81, Asp-87, and Gln-150 each coordinate substrate. The N-linked (GlcNAc...) asparagine glycan is linked to Asn-237. Substrate contacts are provided by residues Arg-267, Arg-324, 324-325 (RT), 333-334 (YD), Lys-339, Tyr-360, Asp-378, and 378-380 (DWY). Residue Asn-398 is glycosylated (N-linked (GlcNAc...) asparagine).

This sequence belongs to the glycosyl hydrolase 33 family.

The protein localises to the secreted. The catalysed reaction is Hydrolysis of alpha-(2-&gt;3)-, alpha-(2-&gt;6)-, alpha-(2-&gt;8)- glycosidic linkages of terminal sialic acid residues in oligosaccharides, glycoproteins, glycolipids, colominic acid and synthetic substrates.. Its function is as follows. Sialidase is able to release sialic acid from a wide variety of natural substrates. The protein is Exo-alpha-sialidase ARB_03431 of Arthroderma benhamiae (strain ATCC MYA-4681 / CBS 112371) (Trichophyton mentagrophytes).